The sequence spans 387 residues: Chaperone protein DnaJ (387 aa).

The region spanning 6–70 is the J domain; sequence DYYEILGLSR…EKRAQYDRFG (65 aa). The CR-type zinc finger occupies 130–212; it reads GVRKDIDVPR…CSGTGRVRNT (83 aa). Cys-143, Cys-146, Cys-160, Cys-163, Cys-186, Cys-189, Cys-200, and Cys-203 together coordinate Zn(2+). CXXCXGXG motif repeat units follow at residues 143–150, 160–167, 186–193, and 200–207; these read CSNCSGTG, CPTCGGTG, CSTCRGKG, and CPVCSGTG. The interval 143–162 is disordered; sequence CSNCSGTGARPGTSPKRCPT.

The protein belongs to the DnaJ family. In terms of assembly, homodimer. Zn(2+) is required as a cofactor.

Its subcellular location is the cytoplasm. In terms of biological role, participates actively in the response to hyperosmotic and heat shock by preventing the aggregation of stress-denatured proteins and by disaggregating proteins, also in an autonomous, DnaK-independent fashion. Unfolded proteins bind initially to DnaJ; upon interaction with the DnaJ-bound protein, DnaK hydrolyzes its bound ATP, resulting in the formation of a stable complex. GrpE releases ADP from DnaK; ATP binding to DnaK triggers the release of the substrate protein, thus completing the reaction cycle. Several rounds of ATP-dependent interactions between DnaJ, DnaK and GrpE are required for fully efficient folding. Also involved, together with DnaK and GrpE, in the DNA replication of plasmids through activation of initiation proteins. The protein is Chaperone protein DnaJ of Methanosarcina thermophila.